Consider the following 88-residue polypeptide: Protein transport protein SBH2 (88 aa).

Residues 1-42 (MAASVPPGGQRILQKRRQAQSIKEKQAKQTPTSTRQAGYGGS) are disordered. The Cytoplasmic portion of the chain corresponds to 1 to 61 (MAASVPPGGQ…DEANGFRVDS (61 aa)). The span at 28–42 (KQTPTSTRQAGYGGS) shows a compositional bias: polar residues. A helical membrane pass occupies residues 62 to 82 (LVVLFLSVGFIFSVIALHLLT).

Belongs to the SEC61-beta family. In terms of assembly, component of the heterotrimeric Ssh1 complex, which is composed of SSH1, SBH2 and SSS1.

It localises to the endoplasmic reticulum membrane. Its function is as follows. Part of the Ssh1 complex, which probably is the major component of a channel-forming translocon complex that may function exclusively in the cotranslational pathway of protein endoplasmic reticulum (ER) import. This chain is Protein transport protein SBH2 (SBH2), found in Saccharomyces cerevisiae (strain ATCC 204508 / S288c) (Baker's yeast).